We begin with the raw amino-acid sequence, 545 residues long: Chaperonin GroEL 1 (545 aa).

ATP-binding positions include 29–32 (TLGP), 86–90 (DGTTT), Gly-413, 479–481 (DAA), and Asp-495. The tract at residues 525-545 (PEPKENNPAGSGAGMGGDFDY) is disordered. Gly residues predominate over residues 535 to 545 (SGAGMGGDFDY).

It belongs to the chaperonin (HSP60) family. Forms a cylinder of 14 subunits composed of two heptameric rings stacked back-to-back. Interacts with the co-chaperonin GroES.

The protein resides in the cytoplasm. It catalyses the reaction ATP + H2O + a folded polypeptide = ADP + phosphate + an unfolded polypeptide.. Its function is as follows. Together with its co-chaperonin GroES, plays an essential role in assisting protein folding. The GroEL-GroES system forms a nano-cage that allows encapsulation of the non-native substrate proteins and provides a physical environment optimized to promote and accelerate protein folding. The sequence is that of Chaperonin GroEL 1 from Thermostichus vulcanus (Synechococcus vulcanus).